We begin with the raw amino-acid sequence, 350 residues long: Serine/threonine-protein kinase SRK2F (350 aa).

Positions 4–260 constitute a Protein kinase domain; that stretch reads YDILRDLGSG…VPEIEKHPWF (257 aa). ATP is bound by residues 10 to 18 and K33; that span reads LGSGNFGVA. D123 acts as the Proton acceptor in catalysis. The stretch at 270–303 forms a coiled coil; that stretch reads EEEKCDNGVEEEEEEEEKCRQSVEEIVKIIEEAR.

Belongs to the protein kinase superfamily. Ser/Thr protein kinase family. In terms of tissue distribution, expressed in seedlings.

It carries out the reaction L-seryl-[protein] + ATP = O-phospho-L-seryl-[protein] + ADP + H(+). The enzyme catalyses L-threonyl-[protein] + ATP = O-phospho-L-threonyl-[protein] + ADP + H(+). The polypeptide is Serine/threonine-protein kinase SRK2F (SRK2F) (Arabidopsis thaliana (Mouse-ear cress)).